A 301-amino-acid polypeptide reads, in one-letter code: Protoheme IX farnesyltransferase (301 aa).

Transmembrane regions (helical) follow at residues 20-42 (FTEL…GMWL), 55-75 (VDVI…SGAF), 105-125 (ALMV…MTTW), 126-146 (QAGV…SLYA), 150-172 (LVSN…WFAV), 176-198 (FSMV…FYAI), 227-247 (MFFW…LGIV), 249-269 (VILA…GFKM), and 280-300 (FIYS…ISIF).

It belongs to the UbiA prenyltransferase family. Protoheme IX farnesyltransferase subfamily. In terms of assembly, interacts with CtaA.

The protein resides in the cell membrane. It catalyses the reaction heme b + (2E,6E)-farnesyl diphosphate + H2O = Fe(II)-heme o + diphosphate. It functions in the pathway porphyrin-containing compound metabolism; heme O biosynthesis; heme O from protoheme: step 1/1. Functionally, converts heme B (protoheme IX) to heme O by substitution of the vinyl group on carbon 2 of heme B porphyrin ring with a hydroxyethyl farnesyl side group. This chain is Protoheme IX farnesyltransferase, found in Listeria welshimeri serovar 6b (strain ATCC 35897 / DSM 20650 / CCUG 15529 / CIP 8149 / NCTC 11857 / SLCC 5334 / V8).